Consider the following 430-residue polypeptide: Divergent protein kinase domain 2A (430 aa).

Residues Met-1–Leu-35 form the signal peptide.

Belongs to the DIPK family. Expressed in heart, brain, liver, spleen, kidney, lung, thymus, testis, ovary and muscle.

Its subcellular location is the golgi apparatus. The protein resides in the cytoplasmic vesicle. The protein localises to the COPI-coated vesicle. It is found in the secreted. In terms of biological role, may play a role in cardiomyocyte proliferation through paracrine signaling and activation of the PI3-kinase signaling cascade. In Mus musculus (Mouse), this protein is Divergent protein kinase domain 2A (Dipk2a).